A 1303-amino-acid polypeptide reads, in one-letter code: D-lysergyl-peptide-synthetase subunit 2 (1303 aa).

The adenylation (A) domain stretch occupies residues 256 to 653 (EWCRWTPSAV…CRKSTQVKLR (398 aa)). Residues 793–869 (APSNDIEEAF…ELARHTKLVA (77 aa)) form the Carrier domain. Residue S830 is modified to O-(pantetheine 4'-phosphoryl)serine. The interval 905-1294 (EDVYPCTPLQ…HAAPRTLIGD (390 aa)) is condensation (C) domain.

Belongs to the NRP synthetase family.

It participates in alkaloid biosynthesis; ergot alkaloid biosynthesis. D-lysergyl-peptide-synthetase subunit 2; part of the gene cluster that mediates the biosynthesis of fungal ergot alkaloid. DmaW catalyzes the first step of ergot alkaloid biosynthesis by condensing dimethylallyl diphosphate (DMAP) and tryptophan to form 4-dimethylallyl-L-tryptophan. The second step is catalyzed by the methyltransferase easF that methylates 4-dimethylallyl-L-tryptophan in the presence of S-adenosyl-L-methionine, resulting in the formation of 4-dimethylallyl-L-abrine. The catalase easC and the FAD-dependent oxidoreductase easE then transform 4-dimethylallyl-L-abrine to chanoclavine-I which is further oxidized by easD in the presence of NAD(+), resulting in the formation of chanoclavine-I aldehyde. Agroclavine dehydrogenase easG then mediates the conversion of chanoclavine-I aldehyde to agroclavine via a non-enzymatic adduct reaction: the substrate is an iminium intermediate that is formed spontaneously from chanoclavine-I aldehyde in the presence of glutathione. The presence of easA is not required to complete this reaction. Further conversion of agroclavine to paspalic acid is a two-step process involving oxidation of agroclavine to elymoclavine and of elymoclavine to paspalic acid, the second step being performed by the elymoclavine oxidase cloA. Paspalic acid is then further converted to D-lysergic acid. Ergopeptines are assembled from D-lysergic acid and three different amino acids by the D-lysergyl-peptide-synthetases composed each of a monomudular and a trimodular nonribosomal peptide synthetase subunit. LpsB and lpsC encode the monomodular subunits responsible for D-lysergic acid activation and incorporation into the ergopeptine backbone. LpsA1 and A2 subunits encode the trimodular nonribosomal peptide synthetase assembling the tripeptide portion of ergopeptines. LpsA1 is responsible for formation of the major ergopeptine, ergotamine, and lpsA2 for alpha-ergocryptine, the minor ergopeptine of the total alkaloid mixture elaborated by C.purpurea. D-lysergyl-tripeptides are assembled by the nonribosomal peptide synthetases and released as N-(D-lysergyl-aminoacyl)-lactams. Cyclolization of the D-lysergyl-tripeptides is performed by the Fe(2+)/2-ketoglutarate-dependent dioxygenase easH which introduces a hydroxyl group into N-(D-lysergyl-aminoacyl)-lactam at alpha-C of the aminoacyl residue followed by spontaneous condensation with the terminal lactam carbonyl group. In Claviceps purpurea (strain 20.1) (Ergot fungus), this protein is D-lysergyl-peptide-synthetase subunit 2.